The following is a 420-amino-acid chain: Exodeoxyribonuclease 7 large subunit (420 aa).

The protein belongs to the XseA family. As to quaternary structure, heterooligomer composed of large and small subunits.

It is found in the cytoplasm. It carries out the reaction Exonucleolytic cleavage in either 5'- to 3'- or 3'- to 5'-direction to yield nucleoside 5'-phosphates.. Functionally, bidirectionally degrades single-stranded DNA into large acid-insoluble oligonucleotides, which are then degraded further into small acid-soluble oligonucleotides. The sequence is that of Exodeoxyribonuclease 7 large subunit from Helicobacter pylori (strain G27).